Here is a 226-residue protein sequence, read N- to C-terminus: Large ribosomal subunit protein uL3 (226 aa).

Positions 136 to 162 (NFGSQRASHGNSRSHNVPGSISMAQDP) are disordered. Residues 137-158 (FGSQRASHGNSRSHNVPGSISM) are compositionally biased toward polar residues. The residue at position 160 (Gln-160) is an N5-methylglutamine.

The protein belongs to the universal ribosomal protein uL3 family. Part of the 50S ribosomal subunit. Forms a cluster with proteins L14 and L19. In terms of processing, methylated by PrmB.

Functionally, one of the primary rRNA binding proteins, it binds directly near the 3'-end of the 23S rRNA, where it nucleates assembly of the 50S subunit. In Methylibium petroleiphilum (strain ATCC BAA-1232 / LMG 22953 / PM1), this protein is Large ribosomal subunit protein uL3.